The sequence spans 131 residues: Large ribosomal subunit protein uL22c (131 aa).

Belongs to the universal ribosomal protein uL22 family. Part of the 50S ribosomal subunit.

The protein localises to the plastid. In terms of biological role, this protein binds specifically to 23S rRNA. Functionally, the globular domain of the protein is located near the polypeptide exit tunnel on the outside of the subunit, while an extended beta-hairpin is found that lines the wall of the exit tunnel in the center of the 70S ribosome. This Aneura mirabilis (Parasitic liverwort) protein is Large ribosomal subunit protein uL22c (rpl22).